Consider the following 413-residue polypeptide: GTPase HflX (413 aa).

One can recognise a Hflx-type G domain in the interval 200-386 (VRVALVGYTN…KVYETVREIH (187 aa)). GTP-binding positions include 206–213 (GYTNVGKS), 231–235 (FATLD), 252–255 (DTVG), 318–321 (NKID), and 364–366 (SAT). Residues serine 213 and threonine 233 each coordinate Mg(2+).

It belongs to the TRAFAC class OBG-HflX-like GTPase superfamily. HflX GTPase family. As to quaternary structure, monomer. Associates with the 50S ribosomal subunit. Mg(2+) is required as a cofactor.

It is found in the cytoplasm. Functionally, GTPase that associates with the 50S ribosomal subunit and may have a role during protein synthesis or ribosome biogenesis. In Flavobacterium psychrophilum (strain ATCC 49511 / DSM 21280 / CIP 103535 / JIP02/86), this protein is GTPase HflX.